The primary structure comprises 291 residues: 4-diphosphocytidyl-2-C-methyl-D-erythritol kinase (291 aa).

The active site involves lysine 11. 97 to 107 (PVAAGIGGGSS) contacts ATP. Residue aspartate 139 is part of the active site.

Belongs to the GHMP kinase family. IspE subfamily.

It carries out the reaction 4-CDP-2-C-methyl-D-erythritol + ATP = 4-CDP-2-C-methyl-D-erythritol 2-phosphate + ADP + H(+). It participates in isoprenoid biosynthesis; isopentenyl diphosphate biosynthesis via DXP pathway; isopentenyl diphosphate from 1-deoxy-D-xylulose 5-phosphate: step 3/6. In terms of biological role, catalyzes the phosphorylation of the position 2 hydroxy group of 4-diphosphocytidyl-2C-methyl-D-erythritol. The chain is 4-diphosphocytidyl-2-C-methyl-D-erythritol kinase from Methylorubrum extorquens (strain CM4 / NCIMB 13688) (Methylobacterium extorquens).